The following is a 305-amino-acid chain: Homoserine O-succinyltransferase (305 aa).

Residue Cys142 is the Acyl-thioester intermediate of the active site. Substrate contacts are provided by Lys163 and Ser192. The active-site Proton acceptor is the His235. The active site involves Glu237. Arg249 serves as a coordination point for substrate.

Belongs to the MetA family.

Its subcellular location is the cytoplasm. The enzyme catalyses L-homoserine + succinyl-CoA = O-succinyl-L-homoserine + CoA. It functions in the pathway amino-acid biosynthesis; L-methionine biosynthesis via de novo pathway; O-succinyl-L-homoserine from L-homoserine: step 1/1. In terms of biological role, transfers a succinyl group from succinyl-CoA to L-homoserine, forming succinyl-L-homoserine. This chain is Homoserine O-succinyltransferase, found in Psychromonas ingrahamii (strain DSM 17664 / CCUG 51855 / 37).